Consider the following 496-residue polypeptide: Probable G-protein coupled receptor Mth-like 5 (496 aa).

Residues 1–219 (MLVKTLGAHF…SNFLLRKILN (219 aa)) are Extracellular-facing. A glycan (N-linked (GlcNAc...) asparagine) is linked at Asn82. The chain crosses the membrane as a helical span at residues 220-240 (PIFHGISLVILLVIAIIYFIL). Residues 241-246 (PTLRDL) lie on the Cytoplasmic side of the membrane. A helical membrane pass occupies residues 247–267 (VGNIVTTIAMCLMVSQAADLV). Topologically, residues 268 to 276 (RIFTELTSH) are extracellular. Residues 277 to 297 (VSFIVADIILCFSLLAAFFWL) form a helical membrane-spanning segment. Residues 298 to 327 (NSFGFYIWKTFRSRNVFLRVTDGRKYCYYS) are Cytoplasmic-facing. The helical transmembrane segment at 328–348 (AYAWGCTATMAALAVFAHFFL) threads the bilayer. At 349 to 366 (DAESYKQEHMVGEQETIG) the chain is on the extracellular side. A helical transmembrane segment spans residues 367–387 (WLGICIFFAPIACTILVNIFF). Residues 388–411 (YVTTRKLINRRTVYGRIAHKLKAN) are Cytoplasmic-facing. A helical transmembrane segment spans residues 412–432 (FIMFSLMLLVMSIAWLFLIMS). Residues 433–438 (WLQMEG) lie on the Extracellular side of the membrane. A helical membrane pass occupies residues 439–459 (LLYAHIVVNALQTPLLLYICV). Over 460-496 (LRQRHVTFLLKKTCCYNEPPSANDWGDELHYMNGNDY) the chain is Cytoplasmic.

This sequence belongs to the G-protein coupled receptor 2 family. Mth subfamily.

It localises to the cell membrane. This is Probable G-protein coupled receptor Mth-like 5 (mthl5) from Drosophila melanogaster (Fruit fly).